The primary structure comprises 263 residues: Renal glandular kallikrein (263 aa).

The signal sequence occupies residues 1-18 (MWFLILFLALFLGGIDAA). Positions 19–24 (PPVQSR) are cleaved as a propeptide — activation peptide. The Peptidase S1 domain occupies 25–260 (IIGGFNCEKN…YRSWIKDVMA (236 aa)). 5 disulfide bridges follow: cysteine 31–cysteine 175, cysteine 50–cysteine 66, cysteine 153–cysteine 221, cysteine 186–cysteine 200, and cysteine 211–cysteine 236. The active-site Charge relay system is the histidine 65. N-linked (GlcNAc...) asparagine glycosylation is present at asparagine 102. The active-site Charge relay system is the aspartate 121. Serine 215 functions as the Charge relay system in the catalytic mechanism.

It belongs to the peptidase S1 family. Kallikrein subfamily.

The enzyme catalyses Preferential cleavage of Arg-|-Xaa bonds in small molecule substrates. Highly selective action to release kallidin (lysyl-bradykinin) from kininogen involves hydrolysis of Met-|-Xaa or Leu-|-Xaa.. In terms of biological role, glandular kallikreins cleave Met-Lys and Arg-Ser bonds in kininogen to release Lys-bradykinin. This chain is Renal glandular kallikrein, found in Mastomys natalensis (African soft-furred rat).